The following is a 479-amino-acid chain: UDP-glycosyltransferase 84A3 (479 aa).

His-19 (proton acceptor) is an active-site residue. An an anthocyanidin-binding site is contributed by His-19. Positions 346, 361, 364, 365, 366, and 369 each coordinate UDP-alpha-D-glucose. An an anthocyanidin-binding site is contributed by Gly-384. Residues Asp-385 and Gln-386 each coordinate UDP-alpha-D-glucose.

This sequence belongs to the UDP-glycosyltransferase family.

The enzyme catalyses (E)-4-coumarate + UDP-alpha-D-glucose = 4-O-(beta-D-glucosyl)-trans-4-coumarate + UDP + H(+). It catalyses the reaction (E)-ferulate + UDP-alpha-D-glucose = 1-O-[(E)-feruloyl]-beta-D-glucose + UDP. The catalysed reaction is (E)-caffeate + UDP-alpha-D-glucose = 1-O-[(E)-caffeoyl]-beta-D-glucose + UDP. It carries out the reaction (E)-sinapate + UDP-alpha-D-glucose = 1-O-(trans-sinapoyl)-beta-D-glucose + UDP. The enzyme catalyses (E)-cinnamate + UDP-alpha-D-glucose = 1-O-(trans-cinnamoyl)-beta-D-glucose + UDP. UDP-glucosyltransferase that forms glucose esters with phenylpropanoids. Glucosylates 4-coumarate, ferulate, caffeate, sinapate and cinnamate. This Arabidopsis thaliana (Mouse-ear cress) protein is UDP-glycosyltransferase 84A3.